The following is a 457-amino-acid chain: Probable xyloglucan 6-xylosyltransferase 3 (457 aa).

Residues methionine 1 to glycine 40 are disordered. The Cytoplasmic segment spans residues methionine 1–lysine 51. A helical; Signal-anchor for type II membrane protein transmembrane segment spans residues methionine 52–asparagine 71. Over phenylalanine 72–serine 457 the chain is Lumenal. Residues asparagine 115 and asparagine 431 are each glycosylated (N-linked (GlcNAc...) asparagine).

The protein belongs to the glycosyltransferase 34 family.

Its subcellular location is the golgi apparatus membrane. It catalyses the reaction Transfers an alpha-D-xylosyl residue from UDP-D-xylose to a glucose residue in xyloglucan, forming an alpha-(1-&gt;6)-D-xylosyl-D-glucose linkage.. In terms of biological role, probable xyloglucan xylosyltransferase involved in the biosynthesis of xyloglucan. This is Probable xyloglucan 6-xylosyltransferase 3 from Arabidopsis thaliana (Mouse-ear cress).